The primary structure comprises 723 residues: Transmembrane channel-like protein 7 (723 aa).

2 disordered regions span residues 1-28 and 51-71; these read MSES…LSLD and RRRT…KPTD. Over 1-168 the chain is Extracellular; sequence MSESSGSALQ…GIQSYFSFLR (168 aa). N-linked (GlcNAc...) asparagine glycosylation occurs at Asn-24. The N-linked (GlcNAc...) asparagine glycan is linked to Asn-84. Ser-89 is modified (phosphoserine). Asn-96 carries N-linked (GlcNAc...) asparagine glycosylation. The helical transmembrane segment at 169–189 threads the bilayer; it reads FLVLLNLVIFLIIFMLVLLPV. At 190–219 the chain is on the cytoplasmic side; the sequence is LLTKYKITNSSFVLIPFKDMDKQCTVYPVS. A helical membrane pass occupies residues 220 to 240; the sequence is SSGLIYFYSYIIDLLSGTGFL. At 241–263 the chain is on the extracellular side; the sequence is EETSLFYGHYTIDGVKFQNFTYD. An N-linked (GlcNAc...) asparagine glycan is attached at Asn-259. Residues 264–284 traverse the membrane as a helical segment; sequence LPLAYLLSTIASLALSLLWIV. Topologically, residues 285 to 362 are cytoplasmic; sequence KRSVEGFKIN…EETIRIYSLR (78 aa). A helical membrane pass occupies residues 363–383; the sequence is LFLNCIVLAVLGACFYAIYVA. The Extracellular portion of the chain corresponds to 384–404; that stretch reads TVFSQEHMKKEIDKMVFGENL. The helical transmembrane segment at 405–425 threads the bilayer; sequence FILYLPSIVITLANFITPMIF. At 426-494 the chain is on the cytoplasmic side; it reads AKIIRYEDYS…PCWETQVGQE (69 aa). Residues 495-515 form a helical membrane-spanning segment; sequence MYKLMIFDFIIILAVTLFVDF. The Extracellular segment spans residues 516–555; that stretch reads PRKLLVTYCSSCKLIQCWGQQEFAIPDNVLGIVYGQTICW. Residues 556 to 576 form a helical membrane-spanning segment; that stretch reads IGAFFSPLLPAIATLKFIIIF. At 577 to 601 the chain is on the cytoplasmic side; the sequence is YVKEWSLLYTCRPSPRPFRASNSNF. The helical transmembrane segment at 602 to 622 threads the bilayer; that stretch reads FFLLVLLIGLCLAIIPLTISI. Over 623–665 the chain is Extracellular; the sequence is SRIPSSKACGPFTNFNTTWEVIPKTVSTFPSSLQSFIHGVTSE. The N-linked (GlcNAc...) asparagine glycan is linked to Asn-638. The chain crosses the membrane as a helical span at residues 666–686; that stretch reads AFAVPFFMIICLIMFYFIALA. Over 687–723 the chain is Cytoplasmic; that stretch reads GAHKRVVIQLREQLSLESRDKCYLIQKLTEAQRDMRN.

It belongs to the TMC family. In terms of assembly, interacts with PIEZO2; the interaction inhibits PIEZO2-conducted mechanically activated currents.

It localises to the membrane. Its function is as follows. Acts as an inhibitory modulator of PIEZO2 mechanosensitive channel in dorsal root ganglion (DRG) neurons through physical interactions or interference with the interaction between PIEZO2 and the cytoskeleton. The chain is Transmembrane channel-like protein 7 from Homo sapiens (Human).